A 315-amino-acid chain; its full sequence is Long form salivary protein D7L1 (315 aa).

The N-terminal stretch at 1–18 (MIIVAVLLSFLAHLLVQA) is a signal peptide. 2 disulfide bridges follow: C37-C73 and C69-C128. W55 lines the thromboxane A2 pocket. Position 58 (W58) interacts with leukotriene C4. Y70 is a thromboxane A2 binding site. Positions 152 and 170 each coordinate leukotriene C4. K170 serves as a coordination point for thromboxane A2. 2 cysteine pairs are disulfide-bonded: C178–C211 and C252–C263.

Belongs to the PBP/GOBP family. Distal-lateral and median lobes of female salivary gland (at protein level). Not detected in male salivary gland (at protein level). Expressed in female salivary gland. Not detected in female carcass without salivary glands. Expressed in male salivary gland and other tissues.

It localises to the secreted. Modulates blood feeding of female mosquitoes on vertebrate species by binding and sequestering different mediators involved in the host response. Binds leukotriene C4, leukotriene D4, leukotriene E4 and stable analogs of thromboxane A2, U-46619 and carbocyclic TXA2. Binds weakly prostaglandins: PGD2, PGE2 and PGF2alpha. Does not bind leukotriene B4, biogenic amines, ADP, platelet activating phospholipid derivative PAF and arachidonic acid. Inhibits agonist-induced smooth muscle contraction. Inhibits platelet aggregation induced by low concentrations of collagen in thromboxane A2-dependent manner. In Anopheles stephensi (Indo-Pakistan malaria mosquito), this protein is Long form salivary protein D7L1.